The primary structure comprises 200 residues: Ephrin-A2 (200 aa).

The first 22 residues, 1–22, serve as a signal peptide directing secretion; the sequence is MPRWEAAALLAAIVGVCVWSDD. An Ephrin RBD domain is found at 28-161; it reads SDRYAVYWNR…KLKVYVRPTN (134 aa). N-linked (GlcNAc...) asparagine glycosylation occurs at N36. Intrachain disulfides connect C61–C101 and C89–C150. N-linked (GlcNAc...) asparagine glycosylation is found at N161 and N175. A lipid anchor (GPI-anchor amidated asparagine) is attached at N175. The propeptide at 176 to 200 is removed in mature form; it reads NSCCSLAVPRAVLVAAPVFWTLLGS.

It belongs to the ephrin family. As to quaternary structure, binds to the receptor tyrosine kinases EPHA3, EPHA4 and EPHA5. Interacts with EPHA8; activates EPHA8. Expressed in a gradient across the tectum being more strongly expressed at the posterior pole.

The protein localises to the cell membrane. Its function is as follows. Cell surface GPI-bound ligand for Eph receptors, a family of receptor tyrosine kinases which are crucial for migration, repulsion and adhesion during neuronal, vascular and epithelial development. Binds promiscuously Eph receptors residing on adjacent cells, leading to contact-dependent bidirectional signaling into neighboring cells. The signaling pathway downstream of the receptor is referred to as forward signaling while the signaling pathway downstream of the ephrin ligand is referred to as reverse signaling. With the EPHA2 receptor may play a role in bone remodeling through regulation of osteoclastogenesis and osteoblastogenesis. The protein is Ephrin-A2 (EFNA2) of Gallus gallus (Chicken).